Here is a 509-residue protein sequence, read N- to C-terminus: Kelch repeat protein M-T9 (509 aa).

The BTB domain maps to 15–79 (SDVTVVAGDS…MYAGCDGLND (65 aa)). 5 Kelch repeats span residues 274–320 (VLYC…IVNG), 321–368 (YIYV…YRNE), 370–415 (WIVG…VYNN), 416–463 (RLYC…VYNK), and 465–509 (IYVL…NDEI).

This sequence belongs to the poxviruses Kelch family.

In Myxoma virus (strain Lausanne) (MYXV), this protein is Kelch repeat protein M-T9.